An 87-amino-acid chain; its full sequence is UPF0250 protein Ent638_1166 (87 aa).

The protein belongs to the UPF0250 family.

This is UPF0250 protein Ent638_1166 from Enterobacter sp. (strain 638).